We begin with the raw amino-acid sequence, 226 residues long: MNLKQMVGIEAAKYVEDGMIVGLGTGSTAKFMVDEIGRRVKEEGLSIVGVTTSKETEKQALALGIPLKSIDEVPYVDLTIDGADEISADFQGIKGGGAALLFEKIVATYSKKCIWIVDKSKMVDDLGAFPLPVEVVPYGSRQLVHLFEEKGYHPTLRLNAAGETLITDGGHHIIDLHLEKITDPEALGSYLDNLVGVVEHGLFLNMVSMVIVGYEDGPKTLHVPAR.

Substrate contacts are provided by residues 25-28 (TGST), 81-84 (DGAD), and 94-97 (KGGG). Glu-103 (proton acceptor) is an active-site residue. Residue Lys-121 coordinates substrate.

Belongs to the ribose 5-phosphate isomerase family. In terms of assembly, homodimer.

It carries out the reaction aldehydo-D-ribose 5-phosphate = D-ribulose 5-phosphate. The protein operates within carbohydrate degradation; pentose phosphate pathway; D-ribose 5-phosphate from D-ribulose 5-phosphate (non-oxidative stage): step 1/1. In terms of biological role, catalyzes the reversible conversion of ribose-5-phosphate to ribulose 5-phosphate. This is Ribose-5-phosphate isomerase A from Enterococcus faecalis (strain ATCC 700802 / V583).